Consider the following 350-residue polypeptide: Probable choline kinase 2 (350 aa).

ATP-binding residues include R73, Q210, and D227.

This sequence belongs to the choline/ethanolamine kinase family.

The catalysed reaction is choline + ATP = phosphocholine + ADP + H(+). It functions in the pathway phospholipid metabolism; phosphatidylcholine biosynthesis; phosphocholine from choline: step 1/1. In terms of biological role, involved in phospholipid biosynthesis. Catalyzes the first step in phosphatidylcholine biosynthesis. The polypeptide is Probable choline kinase 2 (Arabidopsis thaliana (Mouse-ear cress)).